The sequence spans 119 residues: Autophagy-related protein 8C-like (119 aa).

Residue G117 is the site of Phosphatidylethanolamine amidated glycine attachment. A propeptide spans S118 to F119 (removed in mature form).

It belongs to the ATG8 family. In terms of assembly, interacts with ATG4. Interacts with the Phytophtora infestans effector PexRD54. Interacts with JOKA2. The C-terminal 2 residues are removed by ATG4 to expose Gly-117 at the C-terminus. The C-terminal Gly is then amidated with phosphatidylethanolamine by an activating system similar to that for ubiquitin. The phosphatidylethanolamine amidated glycine is required for autophagosome formation.

It is found in the cytoplasmic vesicle. The protein localises to the autophagosome membrane. Its subcellular location is the vacuole membrane. The protein resides in the cytoplasm. It localises to the cytoskeleton. Ubiquitin-like modifier involved in autophagosomes formation. May mediate the delivery of the autophagosomes to the vacuole via the microtubule cytoskeleton. ATG8CL-mediated selective autophagy contributes to defense against the fungal pathogen Phytophtora infestans. The chain is Autophagy-related protein 8C-like from Solanum tuberosum (Potato).